Consider the following 906-residue polypeptide: Coatomer subunit beta' (906 aa).

8 WD repeats span residues 13–52 (ARSD…LVKT), 55–94 (VCDL…RVHM), 97–136 (AHSD…SCSQ), 140–180 (GHTH…PNFT), 183–224 (GHEK…CVQT), 227–266 (GHAQ…LEST), 350–388 (SCEI…NKSF), and 390–425 (SAQE…KSFK). N6-acetyllysine is present on lysine 627. The WD 9 repeat unit spans residues 746-783 (IRTGRLPEAAFLARTYLPSQVSRVVKLWRENLSKVNQK). Residues 837 to 863 (EEAKGFQPSRSTAQQELDGKPASPTPV) form a disordered region. At serine 859 the chain carries Phosphoserine. Threonine 861 bears the Phosphothreonine mark. Residues 866–890 (ASHTANKEEKSLLELEVDLDNLELV) are a coiled coil.

This sequence belongs to the WD repeat COPB2 family. As to quaternary structure, oligomeric complex that consists of at least the alpha, beta, beta', gamma, delta, epsilon and zeta subunits. Probably interacts with PEX11A. Interacts with SCYL1. Interacts with JAGN1.

It is found in the cytoplasm. Its subcellular location is the cytosol. It localises to the golgi apparatus membrane. The protein localises to the cytoplasmic vesicle. The protein resides in the COPI-coated vesicle membrane. The coatomer is a cytosolic protein complex that binds to dilysine motifs and reversibly associates with Golgi non-clathrin-coated vesicles, which further mediate biosynthetic protein transport from the ER, via the Golgi up to the trans Golgi network. Coatomer complex is required for budding from Golgi membranes, and is essential for the retrograde Golgi-to-ER transport of dilysine-tagged proteins. In mammals, the coatomer can only be recruited by membranes associated to ADP-ribosylation factors (ARFs), which are small GTP-binding proteins; the complex also influences the Golgi structural integrity, as well as the processing, activity, and endocytic recycling of LDL receptors. In terms of biological role, this coatomer complex protein, essential for Golgi budding and vesicular trafficking, is a selective binding protein (RACK) for protein kinase C, epsilon type. It binds to Golgi membranes in a GTP-dependent manner. This Pongo abelii (Sumatran orangutan) protein is Coatomer subunit beta' (COPB2).